Reading from the N-terminus, the 73-residue chain is MKKDIHPDYHMIDVKLTDGTVIQMKSTWGKEGDTLSLEIDPSSHPAWTGGSSRLMDTGGRVSKFKKKYEGLGF.

The protein belongs to the bacterial ribosomal protein bL31 family. Type A subfamily. Part of the 50S ribosomal subunit.

Functionally, binds the 23S rRNA. The polypeptide is Large ribosomal subunit protein bL31 (rpmE) (Ruegeria pomeroyi (strain ATCC 700808 / DSM 15171 / DSS-3) (Silicibacter pomeroyi)).